A 162-amino-acid chain; its full sequence is Endoribonuclease YbeY (162 aa).

Zn(2+) contacts are provided by His-118, His-122, and His-128.

It belongs to the endoribonuclease YbeY family. Zn(2+) is required as a cofactor.

It is found in the cytoplasm. Its function is as follows. Single strand-specific metallo-endoribonuclease involved in late-stage 70S ribosome quality control and in maturation of the 3' terminus of the 16S rRNA. This is Endoribonuclease YbeY from Glaesserella parasuis serovar 5 (strain SH0165) (Haemophilus parasuis).